The primary structure comprises 220 residues: Deoxyribose-phosphate aldolase (220 aa).

The active-site Proton donor/acceptor is the D89. K151 functions as the Schiff-base intermediate with acetaldehyde in the catalytic mechanism. K180 (proton donor/acceptor) is an active-site residue.

This sequence belongs to the DeoC/FbaB aldolase family. DeoC type 1 subfamily.

The protein resides in the cytoplasm. The catalysed reaction is 2-deoxy-D-ribose 5-phosphate = D-glyceraldehyde 3-phosphate + acetaldehyde. The protein operates within carbohydrate degradation; 2-deoxy-D-ribose 1-phosphate degradation; D-glyceraldehyde 3-phosphate and acetaldehyde from 2-deoxy-alpha-D-ribose 1-phosphate: step 2/2. Catalyzes a reversible aldol reaction between acetaldehyde and D-glyceraldehyde 3-phosphate to generate 2-deoxy-D-ribose 5-phosphate. This is Deoxyribose-phosphate aldolase from Streptococcus suis (strain 98HAH33).